The sequence spans 373 residues: 3-isopropylmalate dehydrogenase (373 aa).

82–93 (GPKWGTGAVRPE) lines the NAD(+) pocket. Residues Arg100, Arg110, Arg139, and Asp231 each coordinate substrate. Residues Asp231 and Asp260 each coordinate Mg(2+). 295-306 (GSAPDLPENKVN) is an NAD(+) binding site.

It belongs to the isocitrate and isopropylmalate dehydrogenases family. As to quaternary structure, homodimer. Mg(2+) serves as cofactor. Mn(2+) is required as a cofactor.

Its subcellular location is the cytoplasm. The catalysed reaction is (2R,3S)-3-isopropylmalate + NAD(+) = 4-methyl-2-oxopentanoate + CO2 + NADH. It functions in the pathway amino-acid biosynthesis; L-leucine biosynthesis; L-leucine from 3-methyl-2-oxobutanoate: step 3/4. In terms of biological role, catalyzes the oxidation of 3-carboxy-2-hydroxy-4-methylpentanoate (3-isopropylmalate) to 3-carboxy-4-methyl-2-oxopentanoate. The product decarboxylates to 4-methyl-2 oxopentanoate. The protein is 3-isopropylmalate dehydrogenase (LEU2) of Scheffersomyces stipitis (strain ATCC 58785 / CBS 6054 / NBRC 10063 / NRRL Y-11545) (Yeast).